The following is a 357-amino-acid chain: tRNA-specific 2-thiouridylase MnmA (357 aa).

ATP is bound by residues 11–18 (AMSGGVDS) and leucine 37. The active-site Nucleophile is cysteine 102. A disulfide bridge connects residues cysteine 102 and cysteine 197. Glycine 126 is an ATP binding site. The interaction with tRNA stretch occupies residues 148–150 (KDQ). Catalysis depends on cysteine 197, which acts as the Cysteine persulfide intermediate. The interval 301–302 (RY) is interaction with tRNA.

The protein belongs to the MnmA/TRMU family.

It is found in the cytoplasm. The catalysed reaction is S-sulfanyl-L-cysteinyl-[protein] + uridine(34) in tRNA + AH2 + ATP = 2-thiouridine(34) in tRNA + L-cysteinyl-[protein] + A + AMP + diphosphate + H(+). In terms of biological role, catalyzes the 2-thiolation of uridine at the wobble position (U34) of tRNA, leading to the formation of s(2)U34. This chain is tRNA-specific 2-thiouridylase MnmA, found in Dehalococcoides mccartyi (strain ATCC BAA-2266 / KCTC 15142 / 195) (Dehalococcoides ethenogenes (strain 195)).